Consider the following 77-residue polypeptide: Acyl carrier protein (77 aa).

Residues 2–77 enclose the Carrier domain; sequence AEVLEKVTKI…DAVKYIEANA (76 aa). Ser-37 carries the O-(pantetheine 4'-phosphoryl)serine modification.

The protein belongs to the acyl carrier protein (ACP) family. Post-translationally, 4'-phosphopantetheine is transferred from CoA to a specific serine of apo-ACP by AcpS. This modification is essential for activity because fatty acids are bound in thioester linkage to the sulfhydryl of the prosthetic group.

It is found in the cytoplasm. Its pathway is lipid metabolism; fatty acid biosynthesis. Its function is as follows. Carrier of the growing fatty acid chain in fatty acid biosynthesis. The protein is Acyl carrier protein of Listeria innocua serovar 6a (strain ATCC BAA-680 / CLIP 11262).